Reading from the N-terminus, the 420-residue chain is Interleukin-5 receptor subunit alpha (420 aa).

A signal peptide spans 1 to 20; it reads MIIVAHVLLILLGATEILQA. Over 21 to 342 the chain is Extracellular; it reads DLLPDEKISL…NDEHKPLREW (322 aa). Positions 32 to 123 constitute a Fibronectin type-III 1 domain; the sequence is PPVNFTIKVT…ASAELHAPPG (92 aa). N-linked (GlcNAc...) asparagine glycans are attached at residues asparagine 35 and asparagine 131. 2 cysteine pairs are disulfide-bonded: cysteine 134–cysteine 155 and cysteine 182–cysteine 196. N-linked (GlcNAc...) asparagine glycosylation is found at asparagine 216 and asparagine 244. One can recognise a Fibronectin type-III 2 domain in the interval 241-334; the sequence is PPLNVTAEIE…WSQPIYVGND (94 aa). A disulfide bridge links cysteine 269 with cysteine 316. Residues 322–326 carry the WSXWS motif motif; the sequence is WSEWS. Residues 343–362 traverse the membrane as a helical segment; sequence FVIVIMATICFILLILSLIC. Residues 363-420 lie on the Cytoplasmic side of the membrane; sequence KICHLWIKLFPPIPAPKSNIKDLFVTTNYEKAGSSETEIEVICYIEKPGVETLEDSVF. Positions 371 to 379 match the Box 1 motif motif; it reads LFPPIPAPK.

Belongs to the type I cytokine receptor family. Type 5 subfamily. In terms of assembly, interacts with IL5. Interacts with CSF2RB. Interacts with JAK2. Interacts with SDCBP. Expressed on eosinophils and basophils.

It is found in the membrane. Cell surface receptor that plays an important role in the survival, differentiation, and chemotaxis of eosinophils. Acts by forming a heterodimeric receptor with CSF2RB subunit and subsequently binding to interleukin-5. In unstimulated conditions, interacts constitutively with JAK2. Heterodimeric receptor activation leads to JAK2 stimulation and subsequent activation of the JAK-STAT pathway. In Homo sapiens (Human), this protein is Interleukin-5 receptor subunit alpha (IL5RA).